Reading from the N-terminus, the 423-residue chain is CDP-diacylglycerol--serine O-phosphatidyltransferase 2 (423 aa).

The next 9 membrane-spanning stretches (helical) occupy residues 38–58, 77–97, 103–123, 195–215, 222–242, 294–314, 319–339, 359–379, and 390–410; these read PHTI…SGAL, WAMI…TILI, VWRL…FLLF, LLLW…RHML, WWDS…WAGM, FVQV…TFFL, WIPP…LIAI, GAFC…CMKF, and TWLI…LLAW.

It belongs to the CDP-alcohol phosphatidyltransferase class-I family.

The protein resides in the endoplasmic reticulum membrane. It carries out the reaction a CDP-1,2-diacyl-sn-glycerol + L-serine = a 1,2-diacyl-sn-glycero-3-phospho-L-serine + CMP + H(+). It functions in the pathway phospholipid metabolism; phosphatidylethanolamine biosynthesis; phosphatidylethanolamine from CDP-diacylglycerol: step 1/2. Catalyzes a base-exchange reaction in which the polar head group of phosphatidylethanolamine (PE) or phosphatidylcholine (PC) is replaced by L-serine. This Oryza sativa subsp. japonica (Rice) protein is CDP-diacylglycerol--serine O-phosphatidyltransferase 2 (PSS2).